The following is a 290-amino-acid chain: MDIVFEKVEHVYNARSPLARRALYDVNVAIRSGAYVAVVGHTGSGKSTLLQHLNGLLQPTSGAVKIGEETITSHKRPKQLKPLRKKVGVVFQFPEHQLFEETVEKDICFGPLNFGVPEDEAKRKARELIKLVGLSEDVLAKSPFDLSGGQMRRVAIAGVLALEPEVLVLDEPTAGLDPRGRKEMMEMFYRLHREKQLTTVLVTHSMEDAARYADEIIVMHEGTVWGHGTPEEMFRDADKLAAIGLSVPETVKLKQQLEKRFGVVIPSPCLTLEQTAEAIQQLFSKVSVHD.

Positions 6–246 (EKVEHVYNAR…ADKLAAIGLS (241 aa)) constitute an ABC transporter domain. An ATP-binding site is contributed by 40-47 (GHTGSGKS).

This sequence belongs to the ABC transporter superfamily. Energy-coupling factor EcfA family. As to quaternary structure, forms a stable energy-coupling factor (ECF) transporter complex composed of 2 membrane-embedded substrate-binding proteins (S component), 2 ATP-binding proteins (A component) and 2 transmembrane proteins (T component).

The protein resides in the cell membrane. Functionally, ATP-binding (A) component of a common energy-coupling factor (ECF) ABC-transporter complex. Unlike classic ABC transporters this ECF transporter provides the energy necessary to transport a number of different substrates. The protein is Energy-coupling factor transporter ATP-binding protein EcfA2 of Geobacillus kaustophilus (strain HTA426).